We begin with the raw amino-acid sequence, 393 residues long: MKRPVTGKDLMIVNMGPHHPSMHGVLRLIVTLDGEDVVDCEPILGYLHRGMEKIAENRAIIQYLPYVTRWDYLATMFTEAITVNGPEQLGNIQVPKRASYIRVIMLELSRIASHLLWLGPFMADIGAQTPFFYIFREREFIYDLFEAATGMRMMHNFFRIGGIAADLPYGWIDKCLDFCDYFLTEVVEYQKLITRNPIFLERVEGVGIIGGEEAINWGLSGPMLRASGIPWDLRKVDRYESYDEFEWEIQWQKQGDSLARYLVRLSEMTESIKIIQQALEGLPGGPYENLESRGFERKRNPEWNDFEYRFISKKPSPTFELSKQELYVRVEAPKGELGIFLIGDQSGFPWRWKIRPPGFINLQILPELVKRMKLADIMTILGSIDIIMGEVDR.

The protein belongs to the complex I 49 kDa subunit family. In terms of assembly, NDH is composed of at least 16 different subunits, 5 of which are encoded in the nucleus.

It localises to the plastid. The protein localises to the chloroplast thylakoid membrane. It catalyses the reaction a plastoquinone + NADH + (n+1) H(+)(in) = a plastoquinol + NAD(+) + n H(+)(out). It carries out the reaction a plastoquinone + NADPH + (n+1) H(+)(in) = a plastoquinol + NADP(+) + n H(+)(out). Its function is as follows. NDH shuttles electrons from NAD(P)H:plastoquinone, via FMN and iron-sulfur (Fe-S) centers, to quinones in the photosynthetic chain and possibly in a chloroplast respiratory chain. The immediate electron acceptor for the enzyme in this species is believed to be plastoquinone. Couples the redox reaction to proton translocation, and thus conserves the redox energy in a proton gradient. This is NAD(P)H-quinone oxidoreductase subunit H, chloroplastic from Crucihimalaya wallichii (Rock-cress).